The primary structure comprises 884 residues: Schlafen family member 5 (884 aa).

An ATP-binding site is contributed by glycine 574–threonine 581.

It belongs to the Schlafen family. Subgroup III subfamily.

Its function is as follows. May have a role in hematopoietic cell differentiation. The protein is Schlafen family member 5 (Slfn5) of Mus musculus (Mouse).